The chain runs to 175 residues: Calcineurin subunit B (175 aa).

4 consecutive EF-hand domains span residues 21 to 56, 60 to 88, 90 to 125, and 131 to 166; these read DEIERLRKRFMKLDRDSSGSIDKNEFMSIPGVSANP, RIMEVFDADNSGDVDFQEFITGLSIFSGR, SKDEKLKFAFKIYDIDKDGLISNGELFIVLKIMVGS, and QLQQIVDRTIMENDLDGDGQLSFEEFKSAIETTEVA. Residues aspartate 34, aspartate 36, serine 38, serine 40, glutamate 45, aspartate 66, aspartate 68, serine 70, aspartate 72, glutamate 77, aspartate 103, aspartate 105, aspartate 107, glutamate 114, aspartate 144, aspartate 146, aspartate 148, glutamine 150, and glutamate 155 each contribute to the Ca(2+) site.

It belongs to the calcineurin regulatory subunit family. In terms of assembly, composed of a catalytic subunit (A) and a regulatory subunit (B).

Functionally, regulatory subunit of calcineurin, a calcium-dependent, calmodulin stimulated protein phosphatase. Confers calcium sensitivity. This is Calcineurin subunit B (CNB1) from Candida glabrata (strain ATCC 2001 / BCRC 20586 / JCM 3761 / NBRC 0622 / NRRL Y-65 / CBS 138) (Yeast).